A 616-amino-acid polypeptide reads, in one-letter code: Glutamine--fructose-6-phosphate aminotransferase [isomerizing] (616 aa).

Cys2 serves as the catalytic Nucleophile; for GATase activity. In terms of domain architecture, Glutamine amidotransferase type-2 spans 2–222 (CGIIGYSGPR…QERIVALSGD (221 aa)). Residues 70 to 89 (TGIGHTRWATHGEPSDRNAH) are disordered. SIS domains are found at residues 289–428 (IRDD…LRGF) and 461–606 (LAHW…VDRP). Residue Lys611 is the For Fru-6P isomerization activity of the active site.

Homodimer.

It localises to the cytoplasm. The catalysed reaction is D-fructose 6-phosphate + L-glutamine = D-glucosamine 6-phosphate + L-glutamate. Functionally, catalyzes the first step in hexosamine metabolism, converting fructose-6P into glucosamine-6P using glutamine as a nitrogen source. The polypeptide is Glutamine--fructose-6-phosphate aminotransferase [isomerizing] (Tropheryma whipplei (strain Twist) (Whipple's bacillus)).